The chain runs to 502 residues: NAD(P)H-quinone oxidoreductase subunit 2, chloroplastic (502 aa).

14 consecutive transmembrane segments (helical) span residues 15 to 35 (VLPEAIIICSSLFILIIDLIF), 42 to 62 (VLPYMAILGLILSMLSLLFQW), 79 to 99 (LSIAFRLLIALSSMLCVLLSI), 108 to 128 (TLSEFLVIFLTATLGAMLLCG), 132 to 152 (ILMIFLSLETLGLCSYILTGY), 167 to 187 (LLIGAASSSILLYGFSLLYGL), 210 to 230 (LASLVALALIIVGISFKIAAA), 253 to 275 (VSSKAAGLMLATRIMTILFPYII), 278 to 298 (WHNIFQILAILSMAIGNIIAI), 307 to 327 (LGYSSIAQAGFLLVGLLAGNI), 334 to 354 (LVYMLIYLFMNLGAFACVILF), 375 to 395 (ILALCLSICLLSLGGIPPFGG), 413 to 433 (LLVFVGLLTSVISIFYYIKII), and 468 to 488 (ILICVIGTTISGIFVNPIISI).

Belongs to the complex I subunit 2 family. As to quaternary structure, NDH is composed of at least 16 different subunits, 5 of which are encoded in the nucleus.

The protein localises to the plastid. Its subcellular location is the chloroplast thylakoid membrane. It catalyses the reaction a plastoquinone + NADH + (n+1) H(+)(in) = a plastoquinol + NAD(+) + n H(+)(out). It carries out the reaction a plastoquinone + NADPH + (n+1) H(+)(in) = a plastoquinol + NADP(+) + n H(+)(out). Functionally, NDH shuttles electrons from NAD(P)H:plastoquinone, via FMN and iron-sulfur (Fe-S) centers, to quinones in the photosynthetic chain and possibly in a chloroplast respiratory chain. The immediate electron acceptor for the enzyme in this species is believed to be plastoquinone. Couples the redox reaction to proton translocation, and thus conserves the redox energy in a proton gradient. This chain is NAD(P)H-quinone oxidoreductase subunit 2, chloroplastic, found in Mesostigma viride (Green alga).